Reading from the N-terminus, the 505-residue chain is Sucrose porin (505 aa).

Residues 1-22 (MYKKRKLAILIALLTGTAAAHG) form the signal peptide. The tract at residues 44-94 (ETRASTAESRAASAEQKVQQLTQQQQQTQATTQQVARRTTQLEEKAERPGG) is disordered. A compositionally biased stretch (low complexity) spans 46–82 (RASTAESRAASAEQKVQQLTQQQQQTQATTQQVARRT). Over residues 83-93 (TQLEEKAERPG) the composition is skewed to basic and acidic residues.

This sequence belongs to the porin LamB (TC 1.B.3) family. Homotrimer.

It localises to the cell outer membrane. In terms of biological role, porin for sucrose uptake. The chain is Sucrose porin (scrY) from Klebsiella pneumoniae.